The chain runs to 831 residues: Vi polysaccharide biosynthesis protein TviD (831 aa).

The protein operates within glycan metabolism; Vi-antigen biosynthesis. Its pathway is capsule biogenesis; capsule polysaccharide biosynthesis. In terms of biological role, may be required for maturation of the Vi polysaccharide. The polypeptide is Vi polysaccharide biosynthesis protein TviD (tviD) (Salmonella typhi).